Consider the following 167-residue polypeptide: uncharacterized protein (167 aa).

The disordered stretch occupies residues 1–21; that stretch reads MFDFSFPTPASAGTRMGPASC.

This is an uncharacterized protein from Homo sapiens (Human).